A 273-amino-acid polypeptide reads, in one-letter code: 1,4-dihydroxy-2-naphthoyl-CoA synthase (273 aa).

Residues R34, 73 to 77 (SGGDQ), Y85, 117 to 121 (YAVGG), T143, S149, Y246, and K261 contribute to the substrate site. 142 to 144 (QTG) contributes to the hydrogencarbonate binding site. Basic and acidic residues predominate over residues 254–265 (GRDAFKEKRDPD). Positions 254–273 (GRDAFKEKRDPDFDQFPKFP) are disordered.

This sequence belongs to the enoyl-CoA hydratase/isomerase family. MenB subfamily. Requires hydrogencarbonate as cofactor.

It catalyses the reaction 2-succinylbenzoyl-CoA + H(+) = 1,4-dihydroxy-2-naphthoyl-CoA + H2O. It participates in quinol/quinone metabolism; 1,4-dihydroxy-2-naphthoate biosynthesis; 1,4-dihydroxy-2-naphthoate from chorismate: step 6/7. The protein operates within quinol/quinone metabolism; menaquinone biosynthesis. Its function is as follows. Converts o-succinylbenzoyl-CoA (OSB-CoA) to 1,4-dihydroxy-2-naphthoyl-CoA (DHNA-CoA). In Staphylococcus aureus (strain MRSA252), this protein is 1,4-dihydroxy-2-naphthoyl-CoA synthase.